Here is a 370-residue protein sequence, read N- to C-terminus: Chaperone protein DnaJ (370 aa).

Residues 5–69 form the J domain; the sequence is DYYEVLGVDR…QKKAHYDQFG (65 aa). The segment at 128 to 210 adopts a CR-type zinc-finger fold; sequence GKETTIEIPR…CGGKGKVRKR (83 aa). The Zn(2+) site is built by C141, C144, C158, C161, C184, C187, C198, and C201. CXXCXGXG motif repeat units lie at residues 141-148, 158-165, 184-191, and 198-205; these read CHTCSGSG, CPHCGGSG, CHHCEGTG, and CATCGGKG.

It belongs to the DnaJ family. As to quaternary structure, homodimer. Requires Zn(2+) as cofactor.

The protein resides in the cytoplasm. Participates actively in the response to hyperosmotic and heat shock by preventing the aggregation of stress-denatured proteins and by disaggregating proteins, also in an autonomous, DnaK-independent fashion. Unfolded proteins bind initially to DnaJ; upon interaction with the DnaJ-bound protein, DnaK hydrolyzes its bound ATP, resulting in the formation of a stable complex. GrpE releases ADP from DnaK; ATP binding to DnaK triggers the release of the substrate protein, thus completing the reaction cycle. Several rounds of ATP-dependent interactions between DnaJ, DnaK and GrpE are required for fully efficient folding. Also involved, together with DnaK and GrpE, in the DNA replication of plasmids through activation of initiation proteins. The chain is Chaperone protein DnaJ from Halalkalibacterium halodurans (strain ATCC BAA-125 / DSM 18197 / FERM 7344 / JCM 9153 / C-125) (Bacillus halodurans).